Reading from the N-terminus, the 63-residue chain is uncharacterized protein (63 aa).

Residues 37-57 traverse the membrane as a helical segment; the sequence is IFFPTTFDVLLLAILIFLACA.

It is found in the cell membrane. This is an uncharacterized protein from Bacillus subtilis (strain 168).